A 434-amino-acid chain; its full sequence is Citrate-proton symporter (434 aa).

Topologically, residues 1–21 are cytoplasmic; it reads MAQHTPATSRAGTFGAILRVT. Residues 22-42 form a helical membrane-spanning segment; that stretch reads SGNFLEQFDFFLFGFYATYIA. At 43–54 the chain is on the periplasmic side; that stretch reads RTFFPAESEFAS. Residues 55–75 traverse the membrane as a helical segment; it reads LMLTFAVFGSGFLMRPVGAIV. At 76–87 the chain is on the cytoplasmic side; that stretch reads LGAYIDRIGRRK. Residues 88 to 108 traverse the membrane as a helical segment; the sequence is GLMVTLAIMGCGTLLIALVPG. Residues 109-111 lie on the Periplasmic side of the membrane; it reads YQT. A helical membrane pass occupies residues 112–132; sequence IGLAAPALVLLGRLLQGFSAG. Residues 133–164 are Cytoplasmic-facing; the sequence is VELGGVSVYLSEIATPGNKGFYTSWQSASQQV. The helical transmembrane segment at 165–185 threads the bilayer; that stretch reads AIVVAALIGYSLNITLGHDAI. S186 is a topological domain (periplasmic). The helical transmembrane segment at 187–207 threads the bilayer; it reads EWGWRIPFFIGCMIIPLIFVL. The Cytoplasmic portion of the chain corresponds to 208 to 238; that stretch reads RRSLQETEAFLQRKHRPDTREIFATIAKNWR. A helical membrane pass occupies residues 239–259; it reads IITAGTLLVAMTTTTFYFITV. At 260-276 the chain is on the periplasmic side; it reads YTPTYGRTVLNLSARDS. The chain crosses the membrane as a helical span at residues 277 to 297; sequence LIVTMLVGVSNFIWLPIGGAI. The Cytoplasmic portion of the chain corresponds to 298–304; it reads SDRIGRR. The chain crosses the membrane as a helical span at residues 305–325; the sequence is AVLMGITLLALITTWPVMQWL. Residues 326–335 are Periplasmic-facing; the sequence is TAAPDFTRMT. The chain crosses the membrane as a helical span at residues 336-356; sequence LVLLWFSFFFGMYNGAMVAAL. The Cytoplasmic segment spans residues 357 to 366; the sequence is TEVMPVYVRT. The chain crosses the membrane as a helical span at residues 367–387; it reads VGFSLAFSLATAIFGGLTPAI. The Periplasmic segment spans residues 388-400; it reads STALVKLTGDKSS. The chain crosses the membrane as a helical span at residues 401-421; that stretch reads PGWWLMCAALCGLAATAMLFV. Over 422 to 434 the chain is Cytoplasmic; the sequence is RLSRGYIAAENKA.

Belongs to the major facilitator superfamily. Metabolite:H+ Symporter (MHS) family (TC 2.A.1.6) family.

It is found in the cell inner membrane. Uptake of citrate across the boundary membrane with the concomitant transport of protons into the cell (symport system). The chain is Citrate-proton symporter (citA) from Salmonella typhi.